A 262-amino-acid chain; its full sequence is Troponin T, slow skeletal muscle (262 aa).

A compositionally biased stretch (acidic residues) spans 1–31; it reads MSDTEEQEYEEEQAEDEEAVEEEEAPEEPEP. Disordered regions lie at residues 1–62 and 109–153; these read MSDT…ERVD and ERAE…KKKV. Serine 2 is subject to Phosphoserine; by CK2. The span at 32 to 41 shows a compositional bias: basic and acidic residues; sequence VAEREEERPK. The segment covering 43-55 has biased composition (pro residues); sequence SRPVVPPLIPPKI. A compositionally biased stretch (basic and acidic residues) spans 109–149; the sequence is ERAEQQRFRTEKERERQAKLAEEKMRKEEEEAKKRAEDDAK.

This sequence belongs to the troponin T family. In terms of assembly, interacts with TPM3. As to expression, expressed in adult soleus muscle.

Its function is as follows. Troponin T is the tropomyosin-binding subunit of troponin, the thin filament regulatory complex which confers calcium-sensitivity to striated muscle actomyosin ATPase activity. This is Troponin T, slow skeletal muscle (Tnnt1) from Mus musculus (Mouse).